The sequence spans 392 residues: uncharacterized protein (392 aa).

Belongs to the chlamydial CPn_0675/CT_696/TC_0068 family.

This is an uncharacterized protein from Chlamydia muridarum (strain MoPn / Nigg).